A 573-amino-acid polypeptide reads, in one-letter code: MLO-like protein 2 (573 aa).

Residues 1–15 lie on the Extracellular side of the membrane; sequence MADQVKERTLEETST. Residues 16-36 traverse the membrane as a helical segment; the sequence is WAVAVVCFVLLFISIVLEHSI. Residues 37–61 lie on the Cytoplasmic side of the membrane; it reads HKIGTWFKKKHKQALFEALEKVKAE. The chain crosses the membrane as a helical span at residues 62–82; sequence LMLLGFISLLLTIGQTPISNI. Residues 83–164 are Extracellular-facing; sequence CISQKVASTM…VSAYGIHQLH (82 aa). Residues 165-185 traverse the membrane as a helical segment; it reads IFIFVLAVVHVVYCIVTYAFG. Residues 186-287 lie on the Cytoplasmic side of the membrane; the sequence is KIKMRTWKSW…KYIQRSLEKD (102 aa). The chain crosses the membrane as a helical span at residues 288-308; sequence FKTVVEISPVIWFVAVLFLLT. At 309 to 317 the chain is on the extracellular side; the sequence is NSYGLRSYL. A helical membrane pass occupies residues 318–338; sequence WLPFIPLVVILIVGTKLEVII. Topologically, residues 339-371 are cytoplasmic; it reads TKLGLRIQEKGDVVRGAPVVQPGDDLFWFGKPR. Residues 372–392 traverse the membrane as a helical segment; sequence FILFLIHLVLFTNAFQLAFFA. At 393–415 the chain is on the extracellular side; the sequence is WSTYEFNLNNCFHESTADVVIRL. A helical transmembrane segment spans residues 416 to 436; that stretch reads VVGAVVQILCSYVTLPLYALV. Residues 437 to 573 lie on the Cytoplasmic side of the membrane; that stretch reads TQMGSKMKPT…KSLRDFSFKK (137 aa). A calmodulin-binding region spans residues 450-471; sequence DRVATALKKWHHTAKNETKHGR. Residues 462 to 573 form a disordered region; it reads TAKNETKHGR…KSLRDFSFKK (112 aa). Polar residues-rich tracts occupy residues 473–490 and 498–513; these read SGSN…THGS and NFNN…SPSP. Ser512 carries the phosphoserine modification. Residues 522–548 show a composition bias toward basic and acidic residues; sequence EHQFWDPESQHQEAETSTHHSLAHESS.

The protein belongs to the MLO family.

The protein resides in the membrane. Functionally, may be involved in modulation of pathogen defense and leaf cell death. Activity seems to be regulated by Ca(2+)-dependent calmodulin binding and seems not to require heterotrimeric G proteins. This Arabidopsis thaliana (Mouse-ear cress) protein is MLO-like protein 2 (MLO2).